A 180-amino-acid chain; its full sequence is Ribonuclease M5 (180 aa).

In terms of domain architecture, Toprim spans 5 to 90 (KQIIIVEGKT…NAFIKKDDIS (86 aa)). Positions 11, 59, and 61 each coordinate Mg(2+).

The protein belongs to the ribonuclease M5 family. Mg(2+) serves as cofactor.

The protein localises to the cytoplasm. The enzyme catalyses Endonucleolytic cleavage of RNA, removing 21 and 42 nucleotides, respectively, from the 5'- and 3'-termini of a 5S-rRNA precursor.. Functionally, required for correct processing of both the 5' and 3' ends of 5S rRNA precursor. Cleaves both sides of a double-stranded region yielding mature 5S rRNA in one step. In Mycoplasma capricolum subsp. capricolum (strain California kid / ATCC 27343 / NCTC 10154), this protein is Ribonuclease M5.